Here is a 177-residue protein sequence, read N- to C-terminus: 18.9 kDa heat shock protein (177 aa).

Residues 1-35 (MSMITSMLGRKQNAQQKGGGGGGRTGGGGGGEIEP) are disordered. Residues 17–32 (KGGGGGGRTGGGGGGE) show a composition bias toward gly residues. Positions 63–177 (AAGVPSTASM…PHARIIPITN (115 aa)) constitute a sHSP domain.

This sequence belongs to the small heat shock protein (HSP20) family. May form oligomeric structures.

The protein localises to the cytoplasm. This chain is 18.9 kDa heat shock protein (HSP18.9), found in Oryza sativa subsp. japonica (Rice).